The primary structure comprises 517 residues: 6-phosphogluconate dehydrogenase, decarboxylating (517 aa).

Residues 35–40 (GLAVMG), 58–60 (NRT), 100–102 (VKA), and Asn-128 each bind NADP(+). Substrate is bound by residues Asn-128 and 154–156 (SGG). Catalysis depends on Lys-208, which acts as the Proton acceptor. Position 211 to 212 (211 to 212 (HN)) interacts with substrate. Catalysis depends on Glu-215, which acts as the Proton donor. Residues Tyr-216, Lys-286, Arg-313, Arg-474, and His-480 each coordinate substrate.

This sequence belongs to the 6-phosphogluconate dehydrogenase family. Homodimer.

It catalyses the reaction 6-phospho-D-gluconate + NADP(+) = D-ribulose 5-phosphate + CO2 + NADPH. It functions in the pathway carbohydrate degradation; pentose phosphate pathway; D-ribulose 5-phosphate from D-glucose 6-phosphate (oxidative stage): step 3/3. Functionally, catalyzes the oxidative decarboxylation of 6-phosphogluconate to ribulose 5-phosphate and CO(2), with concomitant reduction of NADP to NADPH. This chain is 6-phosphogluconate dehydrogenase, decarboxylating (DOR14), found in Candida albicans (Yeast).